The following is a 200-amino-acid chain: Ras-related protein Rab5 (200 aa).

GTP is bound by residues 17 to 25 (GDMGAGKSS), 36 to 42 (LEFQEST), 65 to 69 (DTAGQ), 123 to 126 (NKAD), and 153 to 155 (SAK). The short motif at 39–47 (QESTIGAAF) is the Effector region element. 2 S-geranylgeranyl cysteine lipidation sites follow: cysteine 198 and cysteine 199.

This sequence belongs to the small GTPase superfamily. Rab family. In terms of tissue distribution, virtually not expressed in leaves, higher in stems and roots, and highest in flowers.

Its subcellular location is the cell membrane. Its function is as follows. Protein transport. Probably involved in vesicular traffic. This is Ras-related protein Rab5 (RAB5) from Nicotiana tabacum (Common tobacco).